The primary structure comprises 315 residues: Melanoma-associated antigen 9 (315 aa).

Positions 1–13 are enriched in basic and acidic residues; that stretch reads MSLEQRSPHCKPD. Residues 1–67 are disordered; sequence MSLEQRSPHC…PQSPQGGASS (67 aa). The segment covering 50-67 has biased composition (low complexity); sequence SAAGSSSPPQSPQGGASS. Residues 108 to 307 enclose the MAGE domain; it reads LKLKVAELVH…ICYPSLYEEV (200 aa).

As to expression, expressed in many tumors of several types, such as melanoma, head and neck squamous cell carcinoma, lung carcinoma and breast carcinoma, but not in normal tissues except for testes and placenta.

Not known, though may play a role in embryonal development and tumor transformation or aspects of tumor progression. The polypeptide is Melanoma-associated antigen 9 (MAGEA9) (Homo sapiens (Human)).